Here is a 386-residue protein sequence, read N- to C-terminus: Cytochrome b (386 aa).

The next 4 membrane-spanning stretches (helical) occupy residues 32-52, 76-98, 113-133, and 179-199; these read LGSL…FLAM, YLIR…AHIG, VWVI…LGYC, and FFAL…MHLM. His-82 and His-96 together coordinate heme b. The heme b site is built by His-183 and His-197. His-202 contributes to the a ubiquinone binding site. 4 consecutive transmembrane segments (helical) span residues 225–245, 289–309, 321–341, and 348–368; these read FVFK…LFVF, LGGV…PVTD, ISKT…QLGQ, and FIQL…FIVP.

This sequence belongs to the cytochrome b family. In terms of assembly, fungal cytochrome b-c1 complex contains 10 subunits; 3 respiratory subunits, 2 core proteins and 5 low-molecular weight proteins. Cytochrome b-c1 complex is a homodimer. It depends on heme b as a cofactor.

It is found in the mitochondrion inner membrane. Its function is as follows. Component of the ubiquinol-cytochrome c reductase complex (complex III or cytochrome b-c1 complex) that is part of the mitochondrial respiratory chain. The b-c1 complex mediates electron transfer from ubiquinol to cytochrome c. Contributes to the generation of a proton gradient across the mitochondrial membrane that is then used for ATP synthesis. The protein is Cytochrome b (COB) of Wickerhamomyces canadensis (Yeast).